The primary structure comprises 290 residues: PIH1 domain-containing protein 1 (290 aa).

Residues S12 and S173 each carry the phosphoserine modification.

Belongs to the PIH1 family. As to quaternary structure, component of the R2TP complex composed at least of RUVBL1, RUVBL2, RPAP3 and PIHD1. Component of the PAQosome complex which is responsible for the biogenesis of several protein complexes and which consists of R2TP complex members RUVBL1, RUVBL2, RPAP3 and PIH1D1, URI complex members PFDN2, PFDN6, PDRG1, UXT and URI1 as well as ASDURF, POLR2E and DNAAF10/WDR92. Interacts with phosphorylated TELO2 and mediates interaction of TELO2 with the R2TP complex. Interacts with phosphorylated ECD, EFTUD2/SNRP116, RPB1 and UBR5 and with RPB1 in a phosphorylation-independent manner. Interacts with the core C/D box snoRNP particle components NOP58 and FBL and with RUVBL1/TIP49. Interacts with RPAP3 and DNAAF10. Interacts with histone H4 and with SWI/SNF complex member SMARCB1/SNF5. Interacts with the mTORC1 complex member RPTOR. Interacts with MSL1. Expressed at low levels in normal mammary epithelial cells (at protein level). Highest expression in lung, leukocyte and placenta. Expressed at lower levels in brain, prostate, colon, heart, small intestine, liver, ovary, pancreas, skeletal muscle, spleen, testis and thymus.

The protein resides in the nucleus. Its function is as follows. Involved in the assembly of C/D box small nucleolar ribonucleoprotein (snoRNP) particles. Recruits the SWI/SNF complex to the core promoter of rRNA genes and enhances pre-rRNA transcription. Mediates interaction of TELO2 with the R2TP complex which is necessary for the stability of MTOR and SMG1. Positively regulates the assembly and activity of the mTORC1 complex. In Homo sapiens (Human), this protein is PIH1 domain-containing protein 1 (PIH1D1).